A 38-amino-acid polypeptide reads, in one-letter code: Photosystem II reaction center protein L (38 aa).

Residues 17–37 (SLYWGLLLIFVLAVLFSSYFF) traverse the membrane as a helical segment.

Belongs to the PsbL family. PSII is composed of 1 copy each of membrane proteins PsbA, PsbB, PsbC, PsbD, PsbE, PsbF, PsbH, PsbI, PsbJ, PsbK, PsbL, PsbM, PsbT, PsbX, PsbY, PsbZ, Psb30/Ycf12, at least 3 peripheral proteins of the oxygen-evolving complex and a large number of cofactors. It forms dimeric complexes.

The protein resides in the plastid. The protein localises to the chloroplast thylakoid membrane. In terms of biological role, one of the components of the core complex of photosystem II (PSII). PSII is a light-driven water:plastoquinone oxidoreductase that uses light energy to abstract electrons from H(2)O, generating O(2) and a proton gradient subsequently used for ATP formation. It consists of a core antenna complex that captures photons, and an electron transfer chain that converts photonic excitation into a charge separation. This subunit is found at the monomer-monomer interface and is required for correct PSII assembly and/or dimerization. The polypeptide is Photosystem II reaction center protein L (Ephedra sinica (Chinese ephedra)).